Consider the following 193-residue polypeptide: Superoxide dismutase [Fe] (193 aa).

Histidine 27 provides a ligand contact to Fe cation. Lysine 51 carries the post-translational modification N6-acetyllysine. Residues histidine 74, aspartate 157, and histidine 161 each contribute to the Fe cation site.

The protein belongs to the iron/manganese superoxide dismutase family. Homodimer. Requires Fe cation as cofactor.

The catalysed reaction is 2 superoxide + 2 H(+) = H2O2 + O2. In terms of biological role, destroys superoxide anion radicals which are normally produced within the cells and which are toxic to biological systems. This is Superoxide dismutase [Fe] (sodB) from Escherichia coli O157:H7.